The primary structure comprises 129 residues: Large ribosomal subunit protein bL12c (129 aa).

It belongs to the bacterial ribosomal protein bL12 family. As to quaternary structure, homodimer. Part of the ribosomal stalk of the 50S ribosomal subunit. Forms a multimeric L10(L12)X complex, where L10 forms an elongated spine to which 2 to 4 L12 dimers bind in a sequential fashion. Binds GTP-bound translation factors.

The protein resides in the plastid. The protein localises to the chloroplast. Its function is as follows. Forms part of the ribosomal stalk which helps the ribosome interact with GTP-bound translation factors. Is thus essential for accurate translation. The sequence is that of Large ribosomal subunit protein bL12c from Oltmannsiellopsis viridis (Marine flagellate).